The following is a 27-amino-acid chain: U18-ctenitoxin-Co1a (27 aa).

Belongs to the u18-CNTX family. In terms of tissue distribution, expressed by the venom gland.

It localises to the secreted. Not toxic to mice by intracerebroventricular injection. This Ctenus ornatus (Brazilian spider) protein is U18-ctenitoxin-Co1a.